Here is a 198-residue protein sequence, read N- to C-terminus: Recombination protein RecR (198 aa).

The segment at 56–71 (CDICGNVSEEPTCRIC) adopts a C4-type zinc-finger fold. The Toprim domain maps to 79 to 175 (AVVCVVEEPK…NVTRLASGLP (97 aa)).

It belongs to the RecR family.

May play a role in DNA repair. It seems to be involved in an RecBC-independent recombinational process of DNA repair. It may act with RecF and RecO. The sequence is that of Recombination protein RecR from Saccharopolyspora erythraea (strain ATCC 11635 / DSM 40517 / JCM 4748 / NBRC 13426 / NCIMB 8594 / NRRL 2338).